The chain runs to 197 residues: Xanthine phosphoribosyltransferase (197 aa).

L20 and N27 together coordinate xanthine. Position 128–132 (128–132 (ANGQA)) interacts with 5-phospho-alpha-D-ribose 1-diphosphate. Residue K156 participates in xanthine binding.

It belongs to the purine/pyrimidine phosphoribosyltransferase family. Xpt subfamily. In terms of assembly, homodimer.

The protein resides in the cytoplasm. The enzyme catalyses XMP + diphosphate = xanthine + 5-phospho-alpha-D-ribose 1-diphosphate. It functions in the pathway purine metabolism; XMP biosynthesis via salvage pathway; XMP from xanthine: step 1/1. Its function is as follows. Converts the preformed base xanthine, a product of nucleic acid breakdown, to xanthosine 5'-monophosphate (XMP), so it can be reused for RNA or DNA synthesis. This is Xanthine phosphoribosyltransferase from Bacillus cytotoxicus (strain DSM 22905 / CIP 110041 / 391-98 / NVH 391-98).